The chain runs to 266 residues: 4-hydroxy-tetrahydrodipicolinate reductase (266 aa).

Residues 8–13 (GAAGRM) and glutamate 33 contribute to the NAD(+) site. Arginine 34 contributes to the NADP(+) binding site. NAD(+)-binding positions include 97-99 (GST) and 121-124 (APNM). Histidine 154 serves as the catalytic Proton donor/acceptor. Histidine 155 serves as a coordination point for (S)-2,3,4,5-tetrahydrodipicolinate. The active-site Proton donor is the lysine 158. Residue 164–165 (GT) participates in (S)-2,3,4,5-tetrahydrodipicolinate binding.

This sequence belongs to the DapB family.

The protein resides in the cytoplasm. It catalyses the reaction (S)-2,3,4,5-tetrahydrodipicolinate + NAD(+) + H2O = (2S,4S)-4-hydroxy-2,3,4,5-tetrahydrodipicolinate + NADH + H(+). The enzyme catalyses (S)-2,3,4,5-tetrahydrodipicolinate + NADP(+) + H2O = (2S,4S)-4-hydroxy-2,3,4,5-tetrahydrodipicolinate + NADPH + H(+). The protein operates within amino-acid biosynthesis; L-lysine biosynthesis via DAP pathway; (S)-tetrahydrodipicolinate from L-aspartate: step 4/4. Catalyzes the conversion of 4-hydroxy-tetrahydrodipicolinate (HTPA) to tetrahydrodipicolinate. The chain is 4-hydroxy-tetrahydrodipicolinate reductase from Geobacter sulfurreducens (strain ATCC 51573 / DSM 12127 / PCA).